We begin with the raw amino-acid sequence, 188 residues long: 2-amino-4-hydroxy-6-hydroxymethyldihydropteridine pyrophosphokinase (188 aa).

Belongs to the HPPK family.

The enzyme catalyses 6-hydroxymethyl-7,8-dihydropterin + ATP = (7,8-dihydropterin-6-yl)methyl diphosphate + AMP + H(+). It functions in the pathway cofactor biosynthesis; tetrahydrofolate biosynthesis; 2-amino-4-hydroxy-6-hydroxymethyl-7,8-dihydropteridine diphosphate from 7,8-dihydroneopterin triphosphate: step 4/4. Functionally, catalyzes the transfer of pyrophosphate from adenosine triphosphate (ATP) to 6-hydroxymethyl-7,8-dihydropterin, an enzymatic step in folate biosynthesis pathway. The polypeptide is 2-amino-4-hydroxy-6-hydroxymethyldihydropteridine pyrophosphokinase (folK) (Mycobacterium tuberculosis (strain ATCC 25618 / H37Rv)).